Here is a 35-residue protein sequence, read N- to C-terminus: Tamulustoxin-2 (35 aa).

3 cysteine pairs are disulfide-bonded: cysteine 2–cysteine 22, cysteine 7–cysteine 31, and cysteine 11–cysteine 33.

The protein belongs to the short scorpion toxin superfamily. Potassium channel inhibitor family. Expressed by the venom gland.

Its subcellular location is the secreted. Blocks Kv1.6/KCNA6 potassium channels. This Hottentotta tamulus (Eastern Indian scorpion) protein is Tamulustoxin-2.